We begin with the raw amino-acid sequence, 289 residues long: ATP synthase gamma chain (289 aa).

This sequence belongs to the ATPase gamma chain family. As to quaternary structure, F-type ATPases have 2 components, CF(1) - the catalytic core - and CF(0) - the membrane proton channel. CF(1) has five subunits: alpha(3), beta(3), gamma(1), delta(1), epsilon(1). CF(0) has three main subunits: a, b and c.

The protein localises to the cell inner membrane. In terms of biological role, produces ATP from ADP in the presence of a proton gradient across the membrane. The gamma chain is believed to be important in regulating ATPase activity and the flow of protons through the CF(0) complex. In Leptospira biflexa serovar Patoc (strain Patoc 1 / ATCC 23582 / Paris), this protein is ATP synthase gamma chain.